The chain runs to 537 residues: CTP synthase (537 aa).

An amidoligase domain region spans residues 1 to 265; the sequence is MTKYIFVTGG…GKYLTKRLKL (265 aa). S13 serves as a coordination point for CTP. S13 contributes to the UTP binding site. ATP is bound at residue 14–19; the sequence is GLGKGI. Y54 contributes to the L-glutamine binding site. Position 71 (D71) interacts with ATP. Residues D71 and E139 each coordinate Mg(2+). Residues 146 to 148, 186 to 191, and K222 contribute to the CTP site; these read DIE and KTKPTQ. UTP contacts are provided by residues 186–191 and K222; that span reads KTKPTQ. The 243-residue stretch at 290 to 532 folds into the Glutamine amidotransferase type-1 domain; sequence EIAIVGKYVK…VRAAKEYKQE (243 aa). G351 is an L-glutamine binding site. The active-site Nucleophile; for glutamine hydrolysis is C378. L-glutamine is bound by residues 379–382, E402, and R459; that span reads FGFQ. Catalysis depends on residues H505 and E507.

It belongs to the CTP synthase family. As to quaternary structure, homotetramer.

The catalysed reaction is UTP + L-glutamine + ATP + H2O = CTP + L-glutamate + ADP + phosphate + 2 H(+). It catalyses the reaction L-glutamine + H2O = L-glutamate + NH4(+). It carries out the reaction UTP + NH4(+) + ATP = CTP + ADP + phosphate + 2 H(+). Its pathway is pyrimidine metabolism; CTP biosynthesis via de novo pathway; CTP from UDP: step 2/2. Its activity is regulated as follows. Allosterically activated by GTP, when glutamine is the substrate; GTP has no effect on the reaction when ammonia is the substrate. The allosteric effector GTP functions by stabilizing the protein conformation that binds the tetrahedral intermediate(s) formed during glutamine hydrolysis. Inhibited by the product CTP, via allosteric rather than competitive inhibition. Catalyzes the ATP-dependent amination of UTP to CTP with either L-glutamine or ammonia as the source of nitrogen. Regulates intracellular CTP levels through interactions with the four ribonucleotide triphosphates. This chain is CTP synthase, found in Pyrococcus furiosus (strain ATCC 43587 / DSM 3638 / JCM 8422 / Vc1).